A 144-amino-acid polypeptide reads, in one-letter code: Large ribosomal subunit protein uL16 (144 aa).

It belongs to the universal ribosomal protein uL16 family. As to quaternary structure, part of the 50S ribosomal subunit.

Binds 23S rRNA and is also seen to make contacts with the A and possibly P site tRNAs. This Thermoanaerobacter pseudethanolicus (strain ATCC 33223 / 39E) (Clostridium thermohydrosulfuricum) protein is Large ribosomal subunit protein uL16.